The chain runs to 124 residues: Glycine cleavage system H protein (124 aa).

The 83-residue stretch at 22–104 folds into the Lipoyl-binding domain; the sequence is KAKVGITDFA…YENGYLFIIE (83 aa). Position 63 is an N6-lipoyllysine (Lys-63).

It belongs to the GcvH family. As to quaternary structure, the glycine cleavage system is composed of four proteins: P, T, L and H. (R)-lipoate is required as a cofactor.

In terms of biological role, the glycine cleavage system catalyzes the degradation of glycine. The H protein shuttles the methylamine group of glycine from the P protein to the T protein. The protein is Glycine cleavage system H protein of Endomicrobium trichonymphae.